The primary structure comprises 257 residues: DNA repair protein RecO (257 aa).

The protein belongs to the RecO family.

Involved in DNA repair and RecF pathway recombination. This Streptococcus thermophilus (strain ATCC BAA-491 / LMD-9) protein is DNA repair protein RecO.